The chain runs to 931 residues: Bifunctional uridylyltransferase/uridylyl-removing enzyme (931 aa).

The tract at residues 1-383 is uridylyltransferase; the sequence is MDSVATDSKA…TTGSTWRRVP (383 aa). The uridylyl-removing stretch occupies residues 384–739; it reads ESDDFIVDNN…VGFDPARGVT (356 aa). Positions 499–622 constitute an HD domain; it reads VDEHLIRCIG…VQSVEQMKLL (124 aa). ACT domains lie at 740–822 and 851–931; these read ELTI…AVAR and VIEV…QPAA.

Belongs to the GlnD family. Mg(2+) is required as a cofactor.

It catalyses the reaction [protein-PII]-L-tyrosine + UTP = [protein-PII]-uridylyl-L-tyrosine + diphosphate. The catalysed reaction is [protein-PII]-uridylyl-L-tyrosine + H2O = [protein-PII]-L-tyrosine + UMP + H(+). Its activity is regulated as follows. Uridylyltransferase (UTase) activity is inhibited by glutamine, while glutamine activates uridylyl-removing (UR) activity. Functionally, modifies, by uridylylation and deuridylylation, the PII regulatory proteins (GlnB and homologs), in response to the nitrogen status of the cell that GlnD senses through the glutamine level. Under low glutamine levels, catalyzes the conversion of the PII proteins and UTP to PII-UMP and PPi, while under higher glutamine levels, GlnD hydrolyzes PII-UMP to PII and UMP (deuridylylation). Thus, controls uridylylation state and activity of the PII proteins, and plays an important role in the regulation of nitrogen fixation and metabolism. The sequence is that of Bifunctional uridylyltransferase/uridylyl-removing enzyme from Bradyrhizobium sp. (strain ORS 278).